We begin with the raw amino-acid sequence, 271 residues long: 4-diphosphocytidyl-2-C-methyl-D-erythritol kinase (271 aa).

Residue Lys-17 is part of the active site. 97-107 (PVGSGLGGGSS) lines the ATP pocket. Asp-137 is an active-site residue.

This sequence belongs to the GHMP kinase family. IspE subfamily.

It catalyses the reaction 4-CDP-2-C-methyl-D-erythritol + ATP = 4-CDP-2-C-methyl-D-erythritol 2-phosphate + ADP + H(+). Its pathway is isoprenoid biosynthesis; isopentenyl diphosphate biosynthesis via DXP pathway; isopentenyl diphosphate from 1-deoxy-D-xylulose 5-phosphate: step 3/6. Its function is as follows. Catalyzes the phosphorylation of the position 2 hydroxy group of 4-diphosphocytidyl-2C-methyl-D-erythritol. In Thermotoga maritima (strain ATCC 43589 / DSM 3109 / JCM 10099 / NBRC 100826 / MSB8), this protein is 4-diphosphocytidyl-2-C-methyl-D-erythritol kinase.